The chain runs to 509 residues: ATP synthase subunit alpha (509 aa).

169–176 serves as a coordination point for ATP; the sequence is GDRQTGKT.

It belongs to the ATPase alpha/beta chains family. F-type ATPases have 2 components, CF(1) - the catalytic core - and CF(0) - the membrane proton channel. CF(1) has five subunits: alpha(3), beta(3), gamma(1), delta(1), epsilon(1). CF(0) has three main subunits: a(1), b(2) and c(9-12). The alpha and beta chains form an alternating ring which encloses part of the gamma chain. CF(1) is attached to CF(0) by a central stalk formed by the gamma and epsilon chains, while a peripheral stalk is formed by the delta and b chains.

It localises to the cell inner membrane. It catalyses the reaction ATP + H2O + 4 H(+)(in) = ADP + phosphate + 5 H(+)(out). Functionally, produces ATP from ADP in the presence of a proton gradient across the membrane. The alpha chain is a regulatory subunit. In Rhizobium meliloti (strain 1021) (Ensifer meliloti), this protein is ATP synthase subunit alpha.